Here is a 199-residue protein sequence, read N- to C-terminus: Recombination protein RecR (199 aa).

The C4-type zinc finger occupies 57–72 (CQSCRTFTEQDLCPIC). The 96-residue stretch at 81–176 (GIICVVETPA…VISRIAHGVP (96 aa)) folds into the Toprim domain.

Belongs to the RecR family.

May play a role in DNA repair. It seems to be involved in an RecBC-independent recombinational process of DNA repair. It may act with RecF and RecO. This chain is Recombination protein RecR, found in Shewanella frigidimarina (strain NCIMB 400).